The sequence spans 379 residues: Dual-specificity RNA methyltransferase RlmN (379 aa).

E95 serves as the catalytic Proton acceptor. The Radical SAM core domain maps to 101 to 345 (EETRGTLCVS…TTVRKTRGDD (245 aa)). Residues C108 and C350 are joined by a disulfide bond. Residues C115, C119, and C122 each coordinate [4Fe-4S] cluster. Residues 176-177 (GE), S208, 230-232 (SLH), and N307 each bind S-adenosyl-L-methionine. The S-methylcysteine intermediate role is filled by C350.

This sequence belongs to the radical SAM superfamily. RlmN family. The cofactor is [4Fe-4S] cluster.

It localises to the cytoplasm. It carries out the reaction adenosine(2503) in 23S rRNA + 2 reduced [2Fe-2S]-[ferredoxin] + 2 S-adenosyl-L-methionine = 2-methyladenosine(2503) in 23S rRNA + 5'-deoxyadenosine + L-methionine + 2 oxidized [2Fe-2S]-[ferredoxin] + S-adenosyl-L-homocysteine. The catalysed reaction is adenosine(37) in tRNA + 2 reduced [2Fe-2S]-[ferredoxin] + 2 S-adenosyl-L-methionine = 2-methyladenosine(37) in tRNA + 5'-deoxyadenosine + L-methionine + 2 oxidized [2Fe-2S]-[ferredoxin] + S-adenosyl-L-homocysteine. Specifically methylates position 2 of adenine 2503 in 23S rRNA and position 2 of adenine 37 in tRNAs. m2A2503 modification seems to play a crucial role in the proofreading step occurring at the peptidyl transferase center and thus would serve to optimize ribosomal fidelity. This chain is Dual-specificity RNA methyltransferase RlmN, found in Burkholderia cenocepacia (strain ATCC BAA-245 / DSM 16553 / LMG 16656 / NCTC 13227 / J2315 / CF5610) (Burkholderia cepacia (strain J2315)).